Consider the following 435-residue polypeptide: Transmembrane protease serine 4 (435 aa).

The Cytoplasmic segment spans residues 1-30; the sequence is MESDSGQPLNNRDIVPFRKPRRPQETFKKV. The helical; Signal-anchor for type II membrane protein transmembrane segment at 31-51 threads the bilayer; it reads GIPIIAVLLSLIALVIVALLI. The Extracellular segment spans residues 52-435; sequence KVILDKYYFI…WIYNVRKSEM (384 aa). The 43-residue stretch at 59-101 folds into the LDL-receptor class A domain; it reads YFICGSPLTFIQRGQLCDGHLDCASGEDEEHCVKDFPEKPGVA. 8 disulfides stabilise this stretch: C62–C81, C75–C90, C125–C181, C138–C191, C194–C308, C228–C244, C354–C370, and C381–C408. The region spanning 102-202 is the SRCR domain; sequence VRLSKDRSTL…DCGKSLKTPR (101 aa). N-linked (GlcNAc...) asparagine glycosylation is found at N128 and N176. In terms of domain architecture, Peptidase S1 spans 203–432; sequence VVGGVEAPVD…YLNWIYNVRK (230 aa). Active-site charge relay system residues include H243 and D288. Residue S385 is the Charge relay system of the active site.

The protein belongs to the peptidase S1 family. In terms of processing, proteolytically processed; probably by an autocatalytic mechanism.

Its subcellular location is the cell membrane. It localises to the secreted. Its function is as follows. Plasma membrane-anchored serine protease that directly induces processing of pro-uPA/PLAU into the active form through proteolytic activity. Seems to be capable of activating ENaC. This Mus musculus (Mouse) protein is Transmembrane protease serine 4.